Reading from the N-terminus, the 167-residue chain is Small ribosomal subunit protein uS7c (167 aa).

It belongs to the universal ribosomal protein uS7 family. Part of the 30S ribosomal subunit.

Its subcellular location is the plastid. It is found in the chloroplast. Its function is as follows. One of the primary rRNA binding proteins, it binds directly to 16S rRNA where it nucleates assembly of the head domain of the 30S subunit. This is Small ribosomal subunit protein uS7c (rps7) from Tetradesmus obliquus (Green alga).